The sequence spans 120 residues: Crustacean hyperglycemic hormones 1 (120 aa).

The first 27 residues, Met-1 to Ala-27, serve as a signal peptide directing secretion. 3 disulfides stabilise this stretch: Cys-53-Cys-89, Cys-69-Cys-85, and Cys-72-Cys-98. A Valine amide modification is found at Val-118.

Belongs to the arthropod CHH/MIH/GIH/VIH hormone family.

The protein resides in the secreted. Functionally, hormone found in the sinus gland of isopods and decapods which controls the blood sugar level. Has a secretagogue action over the amylase released from the midgut gland. May act as a stress hormone and may be involved in the control of molting and reproduction. The chain is Crustacean hyperglycemic hormones 1 (CHH1) from Penaeus monodon (Giant tiger prawn).